The chain runs to 499 residues: Lysine--tRNA ligase (499 aa).

Mg(2+)-binding residues include Glu-408 and Glu-415.

This sequence belongs to the class-II aminoacyl-tRNA synthetase family. Homodimer. Mg(2+) serves as cofactor.

It is found in the cytoplasm. It carries out the reaction tRNA(Lys) + L-lysine + ATP = L-lysyl-tRNA(Lys) + AMP + diphosphate. This Bacillus mycoides (strain KBAB4) (Bacillus weihenstephanensis) protein is Lysine--tRNA ligase.